The sequence spans 84 residues: Putative defensin-like protein 101 (84 aa).

The signal sequence occupies residues 1 to 27 (MDITKNIVTLLLVVLFPILFYYNNVLA). Cystine bridges form between C39–C81, C43–C67, C52–C79, and C56–C80.

The protein belongs to the DEFL family.

It is found in the secreted. The chain is Putative defensin-like protein 101 from Arabidopsis thaliana (Mouse-ear cress).